A 430-amino-acid polypeptide reads, in one-letter code: Adenylosuccinate synthetase (430 aa).

GTP is bound by residues 12–18 and 40–42; these read GDEGKGK and GHT. Residue Asp-13 is the Proton acceptor of the active site. Mg(2+) contacts are provided by Asp-13 and Gly-40. IMP is bound by residues 13-16, 38-41, Thr-130, Arg-144, Gln-224, Thr-239, and Arg-303; these read DEGK and NAGH. Catalysis depends on His-41, which acts as the Proton donor. 299-305 contacts substrate; it reads VVTGRPR. Residues Arg-305, 331–333, and 413–415 contribute to the GTP site; these read KLD and STS.

The protein belongs to the adenylosuccinate synthetase family. In terms of assembly, homodimer. It depends on Mg(2+) as a cofactor.

It is found in the cytoplasm. It carries out the reaction IMP + L-aspartate + GTP = N(6)-(1,2-dicarboxyethyl)-AMP + GDP + phosphate + 2 H(+). It participates in purine metabolism; AMP biosynthesis via de novo pathway; AMP from IMP: step 1/2. Plays an important role in the de novo pathway of purine nucleotide biosynthesis. Catalyzes the first committed step in the biosynthesis of AMP from IMP. The sequence is that of Adenylosuccinate synthetase from Azorhizobium caulinodans (strain ATCC 43989 / DSM 5975 / JCM 20966 / LMG 6465 / NBRC 14845 / NCIMB 13405 / ORS 571).